The following is a 408-amino-acid chain: MEGESTTAVISGFVFGALTFHHLNSGSDTEGFLLGDVMGEAKNSITDSQMDDVEVLYTIDIQKHVPCYQLSRFYNALGDLNIPELKKLLAGQKKSQNVIGWYKFRHNTEQIMTFRERLLHKNLQEHFSNSGLVFLLLTSNPATETKSTHRLEYALHKPQDGFFHKVPLVISNLGMSDQQGYKTLCGSCVSVGLNTAIKKHRLEFFNEDGALAEVNRISDMHMTLQEELKKTCSQLVESENSVEQLLEAVNDLKKQIAEKKLLMEEKGNKVSEDTEENVLLCEAFRRFFPQSALLQSCRLSLGGRQIPHSCSVSHNSSDVNELTLMVKQYDFPEAHRRQAGKRKAHSKQLGKTSTKKSRLPPFQRPQSDNSDSESSDSEKLLCTSGTETDGDIVQSLNVEVSRSKSPTF.

One can recognise an MPN domain in the interval 7–155 (TAVISGFVFG…KSTHRLEYAL (149 aa)). A coiled-coil region spans residues 210–272 (ALAEVNRISD…MEEKGNKVSE (63 aa)). The disordered stretch occupies residues 335–408 (HRRQAGKRKA…EVSRSKSPTF (74 aa)). The span at 337–358 (RQAGKRKAHSKQLGKTSTKKSR) shows a compositional bias: basic residues. Over residues 394–408 (QSLNVEVSRSKSPTF) the composition is skewed to polar residues. The residue at position 405 (serine 405) is a Phosphoserine. The pSXXF motif motif lies at 405–408 (SPTF).

It belongs to the FAM175 family. Abraxas subfamily. As to quaternary structure, component of the BRCA1-A complex. Component of the BRISC complex. Homodimer. Interacts directly (when phosphorylated at Ser-405) with brca1. The phosphorylated homodimer can interact directly with two brca1 chains, giving rise to a heterotetramer. Post-translationally, phosphorylation of Ser-405 of the pSXXF motif by ATM or ATR constitutes a specific recognition motif for the BRCT domain of BRCA1.

Its subcellular location is the nucleus. Functionally, involved in DNA damage response and double-strand break (DSB) repair. Component of the BRCA1-A complex, acting as a central scaffold protein that assembles the various components of the complex and mediates the recruitment of brca1. The BRCA1-A complex specifically recognizes 'Lys-63'-linked ubiquitinated histones H2A and H2AX at DNA lesion sites, leading to target the brca1-bard1 heterodimer to sites of DNA damage at DSBs. This complex also possesses deubiquitinase activity that specifically removes 'Lys-63'-linked ubiquitin on histones H2A and H2AX. The protein is BRCA1-A complex subunit Abraxas 1 of Xenopus laevis (African clawed frog).